A 125-amino-acid polypeptide reads, in one-letter code: Large ribosomal subunit protein bL21 (125 aa).

Belongs to the bacterial ribosomal protein bL21 family. In terms of assembly, part of the 50S ribosomal subunit. Contacts protein L20.

In terms of biological role, this protein binds to 23S rRNA in the presence of protein L20. The chain is Large ribosomal subunit protein bL21 from Synechococcus sp. (strain CC9902).